The chain runs to 949 residues: ATPase 5, plasma membrane-type (949 aa).

Residue S2 is modified to N-acetylserine. Residues 2 to 61 (SELDHIKNESVDLVRIPMEEVFEELKCTKQGLTANEASHRLDVFGPNKLEEKKESKLLKF) lie on the Cytoplasmic side of the membrane. A helical membrane pass occupies residues 62-81 (LGFMWNPLSWVMEVAALMAI). Over 82-93 (ALANGGGRPPDW) the chain is Extracellular. Residues 94 to 114 (QDFVGIVCLLLINSTISFIEE) form a helical membrane-spanning segment. Topologically, residues 115 to 243 (NNAGNAAAAL…GHFQKVLTSI (129 aa)) are cytoplasmic. A helical membrane pass occupies residues 244-264 (GNFCICSIALGIIVELLVMYP). The Extracellular portion of the chain corresponds to 265–273 (IQRRRYRDG). Residues 274–291 (IDNLLVLLIGGIPIAMPS) form a helical membrane-spanning segment. Topologically, residues 292-643 (VLSVTMATGS…TSRAIFQRMK (352 aa)) are cytoplasmic. Residue D329 is the 4-aspartylphosphate intermediate of the active site. 2 residues coordinate Mg(2+): D588 and D592. Residues 644–665 (NYTIYAVSITIRIVFGFMFIAL) traverse the membrane as a helical segment. Residues 666 to 670 (IWQFD) are Extracellular-facing. A helical membrane pass occupies residues 671 to 693 (FSPFMVLIIAILNDGTIMTISKD). The Cytoplasmic portion of the chain corresponds to 694 to 709 (RMKPSPQPDSWKLRDI). A helical transmembrane segment spans residues 710-730 (FSTGVVLGGYQALMTVVFFWV). At 731–751 (MKDSDFFSNYFGVRPLSQRPE) the chain is on the extracellular side. A helical transmembrane segment spans residues 752-772 (QMMAALYLQVSIISQALIFVT). Topologically, residues 773–784 (RSRSWSYAECPG) are cytoplasmic. The chain crosses the membrane as a helical span at residues 785 to 805 (LLLLGAFVIAQLVATFIAVYA). The Extracellular portion of the chain corresponds to 806–813 (NWSFARIE). Residues 814 to 834 (GAGWGWAGVIWLYSFLTYIPL) traverse the membrane as a helical segment. Residues 835 to 949 (DLLKFGIRYV…IDTIQQHYTV (115 aa)) are Cytoplasmic-facing. Phosphothreonine is present on T881. Phosphoserine is present on residues S899 and S931. The tract at residues 947–949 (YTV) is interaction with 14-3-3 proteins. A Phosphothreonine modification is found at T948.

This sequence belongs to the cation transport ATPase (P-type) (TC 3.A.3) family. Type IIIA subfamily. As to quaternary structure, binds to 14-3-3 proteins. The binding is induced by phosphorylation of Thr-948. Binding to 14-3-3 proteins activates the H(+)-ATPase. In terms of tissue distribution, expressed in guard cells and leaves.

It localises to the membrane. The catalysed reaction is ATP + H2O + H(+)(in) = ADP + phosphate + 2 H(+)(out). Functionally, the plasma membrane H(+) ATPase of plants and fungi generates a proton gradient that drives the active transport of nutrients by H(+)-symport. The resulting external acidification and/or internal alkinization may mediate growth responses. The chain is ATPase 5, plasma membrane-type (AHA5) from Arabidopsis thaliana (Mouse-ear cress).